The sequence spans 774 residues: FT-interacting protein 7 (774 aa).

Over residues 1-17 the composition is skewed to basic and acidic residues; it reads MMQRPFRPEEYSLKETS. The interval 1–25 is disordered; it reads MMQRPFRPEEYSLKETSPHLGGGAA. 3 C2 domains span residues 23 to 143, 182 to 305, and 346 to 472; these read GAAG…PQWY, IPGD…SQWY, and YSSD…THAY. 5 residues coordinate Ca(2+): Asp-56, Asp-62, Asp-109, Asp-111, and Asp-116. The next 3 membrane-spanning stretches (helical) occupy residues 575 to 595, 606 to 626, and 714 to 734; these read IMGV…ICHW, ILFV…FLYL, and ATAL…VTPF.

Belongs to the MCTP family. As to quaternary structure, interacts with OSH1. Ca(2+) is required as a cofactor. As to expression, expressed in roots, stems, lemma, palea, pistils and ovules. Expressed at low levels in leaves.

Its subcellular location is the cell membrane. Its function is as follows. Promotes nuclear translocation of the transcription factor OSH1, which directly suppresses the auxin biosynthetic gene YUCCA4 during the late development of anthers. Reduction of auxin levels at late stage of anther development, after meiosis of microspore mother cells, is necessary for normal anther dehiscence and seed setting. Required for jasmonate (JA) biosynthetic genes expression and JA production in anthers. The protein is FT-interacting protein 7 of Oryza sativa subsp. japonica (Rice).